The sequence spans 298 residues: Protoheme IX farnesyltransferase (298 aa).

The next 9 helical transmembrane spans lie at V26–V46, I52–V72, V93–L113, L120–L140, I148–G168, A174–L194, L219–Q239, S241–I261, and Y278–F298.

It belongs to the UbiA prenyltransferase family. Protoheme IX farnesyltransferase subfamily.

Its subcellular location is the cell inner membrane. The catalysed reaction is heme b + (2E,6E)-farnesyl diphosphate + H2O = Fe(II)-heme o + diphosphate. The protein operates within porphyrin-containing compound metabolism; heme O biosynthesis; heme O from protoheme: step 1/1. Converts heme B (protoheme IX) to heme O by substitution of the vinyl group on carbon 2 of heme B porphyrin ring with a hydroxyethyl farnesyl side group. This is Protoheme IX farnesyltransferase from Nitrosomonas europaea (strain ATCC 19718 / CIP 103999 / KCTC 2705 / NBRC 14298).